We begin with the raw amino-acid sequence, 1792 residues long: MIFQSFILDNLVFLCMKIINSIVVVGLYYGFLTTFSIGPSYLFLLRARLVEEGTEKKISATTGFITGQLIMFISIYYAPLHLALGRPHIITVIALPYLLFQFFGNNHKNFLNYGYKNPNSIRNFSIQRIFFHNLIFQLLNPFFLPSSILIRLVNIYLFRCNNKFIFLISSFIGWIIGHTFFMKWIEFILVRIQQTNSIKSNVRIQSNKYIMSEFRNSMLKIFLVFLFITCLYYLGRVPPPFFSKKLSEIQETHEIYKKGKKIDVEKNLQRVQTKQKQKRSNNKEGFLSLFSKNENNLYKIDEEKYKLGFVKKPLVNILFNYKRWNRPFRYIKNNRFENVVKNEISEFFFHTCQSDGKERISFMYPPNLSTFHKMMETKFYLFTKDKISYDELSNYWSYTNEEKRNKLSNEFVNRAKVMDKELISLDILENRIRLSNDETKTKYLTKIYDPFLNGRFRGQIENVFSTSIQYEKNEKKNTILINKIHGILISNNTYKKNNSNYPELEKKINIFDRKSLVTTFFFFNLISKFSKKLVSSLSFETLSLFPEHEQVKINYEEEKKQIIKILFDAIRTDLNEKTIVNGNRTKCIRINEIRKKVPRWSYKFIDELEQLEGKNEAENYQIRSRKAKRVVILTNKSKFFKKYDTYNPTGDTDNAEKKKNELALIRYSQQSDFRRDIIKGSIRAQRRKTVTWKFFQKRVHSPLFLDKIEKPLFFSFDSFKSMKIFFMFKIWMRKKEEFEISSYTEERAKESSKKEEEKKKENEERKRIEIAEAWDSIIFAQVIRGILLITQSILRKYILLPSLIITKNIARILFFQFPEWSEDFRDWKREMYIKCTYNGVQLSEREFPKKWLTDGIQIKILFPFRLKPWHKSKLRSNEKKKDLMKKKNFCFLTVWGMEVDLPFSGSPQKNRFSSFFDPIFKELKKKTKQFQFFTFRVLKVLSEKLKLFLTILIEKAKRISKSIIESILKSILKSILSLTKIKQFFKLLFIKFKFKKIDELSENKKDSTIYKNNPMISETTISIQSINSVNCSLKKKKIKDLNAKRKAVIKKIEKIKKGLVISETNIHSNKTTYDSKRVEFEKKKLQILQRRRNARLTRKSHSFFKFFMKRIYRDIFLYISCIPRINIQLFLELTKKFLNKSIYDNEANAERIYKTNQSIIRFISILHKYFHTRNPNSHNSCDISFLSQAYVFFNLLHTRIININIYKLRSVFQYHGIFFFLKNEIKDSFFGAQGIFHYKLKHNNPLNSVRNQWTNWLKDHYYQYDLSKSRWSRLVPQKWRNRITEYRIAQNKDLTKCNSYEKSQLILYKEQQVNALKKKIRKQYRYDLLSYNFINYADKKDSYIYGYRSLFQVKKNQVISSNYNTYKKELFDIIDNLFIKNYISEDAILDMEKNLYRKYFDWMGINREILNRSISNPEFWFFSKFVIFYDAYRGNSQVIPIKLLFFSSNVNQNVSENKKNITRKKKNESLELELETRNRAKAEYPDQRNLESSISNQEKDIENDYVGSDSEKNSKGIKKKKDKNKMEAELNFLLRNFLILHLNWNNFLGQRIFNNVKVYCLLIRLKNLREITIASIQRGELGLDIMMIQNQKNLILLGLRKKKNNKFMKKEIFVIEPVRLSRKNNKQFFMYQTIGLSLIQKNKRKIYHKYPEKIHVNKKNFYKYITRTRDQKITEKKEKDNSDLLVPENILSARRRRELRILICLNPNNINSMHRNTIFYNPNKVQNGFPLLTKKRKYFEKDKKKLMNFKIFLWPKYRLEDLACINRYWFNTHNGSRFSIVRIHMYPRMKIR.

6 consecutive transmembrane segments (helical) span residues 18 to 38 (IINS…FSIG), 64 to 84 (FITG…HLAL), 87 to 107 (PHII…GNNH), 129 to 149 (IFFH…SSIL), 165 to 185 (IFLI…MKWI), and 221 to 241 (IFLV…PPPF).

This sequence belongs to the TIC214 family. In terms of assembly, part of the Tic complex.

Its subcellular location is the plastid. It localises to the chloroplast inner membrane. In terms of biological role, involved in protein precursor import into chloroplasts. May be part of an intermediate translocation complex acting as a protein-conducting channel at the inner envelope. In Glycine max (Soybean), this protein is Protein TIC 214.